The chain runs to 285 residues: Protoheme IX farnesyltransferase (285 aa).

Helical transmembrane passes span 16 to 36 (AKPK…ILAF), 40 to 60 (WYNL…SMII), 106 to 126 (LLAN…YVFV), 136 to 156 (WLNI…GYAA), 165 to 185 (SLLL…ALAL), 217 to 237 (ILMI…YVII), and 265 to 285 (YKFS…SFIL).

This sequence belongs to the UbiA prenyltransferase family. Protoheme IX farnesyltransferase subfamily.

It localises to the cell membrane. It carries out the reaction heme b + (2E,6E)-farnesyl diphosphate + H2O = Fe(II)-heme o + diphosphate. It participates in porphyrin-containing compound metabolism; heme O biosynthesis; heme O from protoheme: step 1/1. Converts heme B (protoheme IX) to heme O by substitution of the vinyl group on carbon 2 of heme B porphyrin ring with a hydroxyethyl farnesyl side group. This Sulfolobus acidocaldarius (strain ATCC 33909 / DSM 639 / JCM 8929 / NBRC 15157 / NCIMB 11770) protein is Protoheme IX farnesyltransferase.